The sequence spans 195 residues: Pyridoxal 5'-phosphate synthase subunit PdxT (195 aa).

46–48 (GES) contributes to the L-glutamine binding site. The active-site Nucleophile is the Cys-78. Residues Arg-105 and 133-134 (IR) each bind L-glutamine. Active-site charge relay system residues include His-169 and Glu-171.

Belongs to the glutaminase PdxT/SNO family. As to quaternary structure, in the presence of PdxS, forms a dodecamer of heterodimers. Only shows activity in the heterodimer.

It carries out the reaction aldehydo-D-ribose 5-phosphate + D-glyceraldehyde 3-phosphate + L-glutamine = pyridoxal 5'-phosphate + L-glutamate + phosphate + 3 H2O + H(+). It catalyses the reaction L-glutamine + H2O = L-glutamate + NH4(+). It participates in cofactor biosynthesis; pyridoxal 5'-phosphate biosynthesis. In terms of biological role, catalyzes the hydrolysis of glutamine to glutamate and ammonia as part of the biosynthesis of pyridoxal 5'-phosphate. The resulting ammonia molecule is channeled to the active site of PdxS. This chain is Pyridoxal 5'-phosphate synthase subunit PdxT, found in Geobacillus thermodenitrificans (strain NG80-2).